A 523-amino-acid chain; its full sequence is Sialate O-acetylesterase (523 aa).

The signal sequence occupies residues 1–23 (MVAPGLVLGLVLPLILWADRSAG). N-linked (GlcNAc...) asparagine glycosylation is found at Asn107, Asn138, Asn267, Asn290, Asn401, and Asn422.

In terms of tissue distribution, widely expressed with high expression in the testis, prostate, and colon.

The protein localises to the lysosome. It is found in the cytoplasm. It carries out the reaction N-acetyl-9-O-acetylneuraminate + H2O = N-acetylneuraminate + acetate + H(+). The catalysed reaction is an Ac-O-9-sialoglycoconjugate + H2O = a sialoglycoconjugate + acetate + H(+). In terms of biological role, catalyzes the removal of O-acetyl ester groups from position 9 of the free diacetylated sialate N-acetyl-9-O-acetylneuraminate (Neu5,9Ac2) in the cytosol and of the diacetylated sialate residues of sialylglycoconjugates in the lysosomes. Together with the sialate-O-acetyltransferase they regulate the balance of acetylated sialoglycoconjugates, key players in various processes such as cell-cell interactions, host-pathogen recognition, and tumor antigenicity. This chain is Sialate O-acetylesterase (SIAE), found in Homo sapiens (Human).